We begin with the raw amino-acid sequence, 96 residues long: Co-chaperonin GroES (96 aa).

The protein belongs to the GroES chaperonin family. As to quaternary structure, heptamer of 7 subunits arranged in a ring. Interacts with the chaperonin GroEL.

The protein resides in the cytoplasm. In terms of biological role, together with the chaperonin GroEL, plays an essential role in assisting protein folding. The GroEL-GroES system forms a nano-cage that allows encapsulation of the non-native substrate proteins and provides a physical environment optimized to promote and accelerate protein folding. GroES binds to the apical surface of the GroEL ring, thereby capping the opening of the GroEL channel. The sequence is that of Co-chaperonin GroES from Paracidovorax citrulli (strain AAC00-1) (Acidovorax citrulli).